Reading from the N-terminus, the 94-residue chain is Parvalbumin beta 4 (94 aa).

An N-acetylalanine modification is found at Ala-1. EF-hand domains are found at residues 36-63 and 67-94; these read FFAIIDQDHSGFIEEEELKLFLQTFSAG and LSDAETKTFLAAGDVDGDGMIGVDEFAA. Residues Asp-41, Asp-43, Ser-45, Phe-47, Glu-49, Glu-52, Asp-80, Asp-82, Asp-84, Met-86, and Glu-91 each coordinate Ca(2+).

It belongs to the parvalbumin family.

Its function is as follows. In muscle, parvalbumin is thought to be involved in relaxation after contraction. It binds two calcium ions. This Merluccius bilinearis (Silver hake) protein is Parvalbumin beta 4.